The sequence spans 262 residues: Aconitate isomerase (262 aa).

An N-terminal signal peptide occupies residues 1–22 (MFPRLPTLALGALLLASTPLLA).

As to quaternary structure, monomer.

The enzyme catalyses trans-aconitate = cis-aconitate. Its activity is regulated as follows. Activated more than 1.5 fold by Ca(2+), Mg(2+), Mn(2+), Ni(2+), Fe(2+), DDT and 1,10-phenanthroline. Strongly inhibited by Ag(+) and Hg(+). Inhibited by addition of 20% (v/v) glycerol. No effect by addition of NADH or NADPH. In terms of biological role, involved in assimilation of trans-aconitic acid. Preference for cis-aconitic acid is 14-fold higher than for trans-aconitic acid. Not active on intermediates of tricarboxylic acid (TCA) cycle including citric acid, succinic acid, fumaric acid, and 2-oxoglutaric acid or on other dicarboxilic acids including itaconic acid, formic acid, citraconic acid or maleic acid. The sequence is that of Aconitate isomerase from Pseudomonas sp.